The following is a 151-amino-acid chain: Internal scaffolding protein VP3 (151 aa).

Positions 120 to 151 (VETPQQAPQSTTNQTTTKPAPASGEPTPVPTP) are disordered. Residues 122–137 (TPQQAPQSTTNQTTTK) show a composition bias toward polar residues.

The protein belongs to the microvidae B protein family.

It localises to the host cytoplasm. Its function is as follows. Participates in the assembly of the viral procapsid in the cytoplasm. Internal scaffolding protein VP3 is released from the procapsid upon genome packaging, possibly through affinity displacement by the protein VP8, or by proteolysis. The sequence is that of Internal scaffolding protein VP3 from Bdellovibrio bacteriovorus (Bacteriophage phiMH2K).